Here is an 85-residue protein sequence, read N- to C-terminus: Large ribosomal subunit protein bL27 (85 aa).

It belongs to the bacterial ribosomal protein bL27 family.

This chain is Large ribosomal subunit protein bL27, found in Sodalis glossinidius (strain morsitans).